The following is a 415-amino-acid chain: Teichoic acid D-alanyltransferase (415 aa).

The Extracellular segment spans residues 1-16; the sequence is MIDFLKQLPHLEPYGN. Residues 17-36 traverse the membrane as a helical segment; sequence PFYFIYLGIALLPIFIGLFF. Residues 37-40 are Cytoplasmic-facing; sequence KKRF. Residues 41 to 56 traverse the membrane as a helical segment; that stretch reads AIYECLVSITFIVLAL. Residues 57 to 60 lie on the Extracellular side of the membrane; it reads TGTH. The chain crosses the membrane as a helical span at residues 61–87; the sequence is ASQILALLFYIVWQIIWVYSYKRYRSQ. At 88–90 the chain is on the cytoplasmic side; that stretch reads RDN. A helical transmembrane segment spans residues 91 to 115; sequence KWVFYLHSFLVVLPLILVKVEPTIN. Residues 116–125 lie on the Extracellular side of the membrane; it reads GTQSLLNFLG. Residues 126–142 traverse the membrane as a helical segment; that stretch reads ISYLTFRAVGMIIEMRD. At 143-149 the chain is on the cytoplasmic side; sequence GVLKEFT. An intramembrane segment occupies 150–179; the sequence is LGEFLRFMLFMPTFTSGPIDRFKRFNEDYQ. Residues 180 to 183 are Cytoplasmic-facing; it reads SIPN. The chain crosses the membrane as a helical span at residues 184–227; it reads RDELLNMLEQAVKYIMLGFLYKFVLAQIFGSMLLPPLKAQALSQ. Residues 228–232 are Extracellular-facing; that stretch reads GGIFN. Residues 233 to 264 form a helical membrane-spanning segment; that stretch reads LPTLGVMYVYGFDLFFDFAGYSMFALAVSNLM. Residues 265–274 are Cytoplasmic-facing; it reads GIKSPINFDK. Residues 275-311 lie within the membrane without spanning it; it reads PFISRDMKEFWNRWHMSLSFWFRDFVFMRLVIVLMRN. At 312 to 316 the chain is on the cytoplasmic side; it reads KVFKN. A helical transmembrane segment spans residues 317–336; the sequence is RNTTSNVAYIINMMVMGFWH. The active site involves histidine 336. Residues 337-339 are Extracellular-facing; it reads GIT. A helical transmembrane segment spans residues 340–373; sequence WYYIAYGIFHGIGLVINDAWLRKKKTINKDRKKA. Over 374-381 the chain is Cytoplasmic; that stretch reads GLKPLPEN. Residues 382–404 form a helical membrane-spanning segment; sequence KWTKALGIFITFNTVMLSFLIFS. Residues 405–415 lie on the Extracellular side of the membrane; sequence GFLNDLWFTKK.

Belongs to the membrane-bound acyltransferase family.

It localises to the cell membrane. The protein operates within cell wall biogenesis; lipoteichoic acid biosynthesis. In terms of biological role, O-acyltransferase that catalyzes D-alanylation of both teichoic acid and lipoteichoic acid (LTA). D-alanylation of LTA plays an important role in modulating the properties of the cell wall in Gram-positive bacteria, influencing the net charge of the cell wall. Catalyzes D-alanylation from DltC carrier protein. The protein is Teichoic acid D-alanyltransferase of Streptococcus thermophilus (strain ATCC BAA-250 / LMG 18311).